A 1101-amino-acid chain; its full sequence is Protein diaphanous homolog 2 (1101 aa).

M1 bears the N-acetylmethionine mark. The disordered stretch occupies residues 1 to 44 (MEQPGAAASGAGGGSEEPGGGRSNKRSAGNRAANEEETKNKPKL). Over residues 10–22 (GAGGGSEEPGGGR) the composition is skewed to gly residues. The 367-residue stretch at 98–464 (SLNLSEKEVL…QIVLHCSGMD (367 aa)) folds into the GBD/FH3 domain. Coiled coils occupy residues 366–418 (KEKE…MLKD) and 487–547 (KAKV…SSSG). A compositionally biased stretch (polar residues) spans 536-546 (RTQAQVLSSSS). Disordered regions lie at residues 536-594 (RTQA…PPPP), 1010-1048 (NKRR…DINK), and 1070-1101 (RDRR…ISSK). A compositionally biased stretch (pro residues) spans 549–594 (PGPPAAPPLPGVGPPPPPPAPPLPGGAPLPPPPPPLPGMMGIPPPP). In terms of domain architecture, FH1 spans 549 to 623 (PGPPAAPPLP…PPPGISLNLP (75 aa)). The FH2 domain occupies 628–1028 (QKKMYKPEVS…TRRAKLAKEK (401 aa)). A coiled-coil region spans residues 903-1053 (SASKVSAQIL…IDINKEGDET (151 aa)). Basic and acidic residues-rich tracts occupy residues 1010–1035 (NKRR…EKLE) and 1078–1090 (RNPD…LERS). The DAD domain maps to 1051–1081 (DETGVMDNLLEALQSGAAFRDRRKRIPRNPD).

Belongs to the formin homology family. Diaphanous subfamily. In terms of assembly, isoform 3 interacts with RHOD in the GTP-bound form. In terms of tissue distribution, expressed in testis, ovary, small intestine, prostate, lung, liver, kidney and leukocytes.

The protein localises to the cytoplasm. Its subcellular location is the cytosol. It is found in the early endosome. Could be involved in oogenesis. Involved in the regulation of endosome dynamics. Implicated in a novel signal transduction pathway, in which isoform 3 and CSK are sequentially activated by RHOD to regulate the motility of early endosomes through interactions with the actin cytoskeleton. The polypeptide is Protein diaphanous homolog 2 (DIAPH2) (Homo sapiens (Human)).